Reading from the N-terminus, the 156-residue chain is ATP synthase subunit b (156 aa).

The chain crosses the membrane as a helical span at residues Leu-7–Pro-27.

It belongs to the ATPase B chain family. As to quaternary structure, F-type ATPases have 2 components, F(1) - the catalytic core - and F(0) - the membrane proton channel. F(1) has five subunits: alpha(3), beta(3), gamma(1), delta(1), epsilon(1). F(0) has three main subunits: a(1), b(2) and c(10-14). The alpha and beta chains form an alternating ring which encloses part of the gamma chain. F(1) is attached to F(0) by a central stalk formed by the gamma and epsilon chains, while a peripheral stalk is formed by the delta and b chains.

Its subcellular location is the cell inner membrane. Its function is as follows. F(1)F(0) ATP synthase produces ATP from ADP in the presence of a proton or sodium gradient. F-type ATPases consist of two structural domains, F(1) containing the extramembraneous catalytic core and F(0) containing the membrane proton channel, linked together by a central stalk and a peripheral stalk. During catalysis, ATP synthesis in the catalytic domain of F(1) is coupled via a rotary mechanism of the central stalk subunits to proton translocation. In terms of biological role, component of the F(0) channel, it forms part of the peripheral stalk, linking F(1) to F(0). The polypeptide is ATP synthase subunit b (Shewanella sp. (strain ANA-3)).